A 145-amino-acid chain; its full sequence is MNTSLSWFEQLDVLLNATDGNVVRNKQWLYPLGVSTELIGLCICFFCSSGCIFLGSPPQNSTAVTPAVLWEESEIMQKELKLLQYQLSQHQELLLKQLAEGRQAQVGSWKIPRGAPFLTWSPASFSSMPRVLSKRTYSFGAPKCS.

A helical membrane pass occupies residues 38-54; it reads LIGLCICFFCSSGCIFL.

The protein resides in the membrane. The chain is Transmembrane protein CCDC163 from Homo sapiens (Human).